Reading from the N-terminus, the 368-residue chain is Methionine import ATP-binding protein MetN (368 aa).

Residues 5-260 (IELNNLSVQF…PKEALTKQFI (256 aa)) form the ABC transporter domain. 41–48 (GYSGAGKS) contacts ATP.

The protein belongs to the ABC transporter superfamily. Methionine importer (TC 3.A.1.24) family. In terms of assembly, the complex is composed of two ATP-binding proteins (MetN), two transmembrane proteins (MetI) and a solute-binding protein (MetQ).

The protein localises to the cell membrane. The catalysed reaction is L-methionine(out) + ATP + H2O = L-methionine(in) + ADP + phosphate + H(+). It carries out the reaction D-methionine(out) + ATP + H2O = D-methionine(in) + ADP + phosphate + H(+). In terms of biological role, part of the ABC transporter complex MetNIQ involved in methionine import. Responsible for energy coupling to the transport system. The sequence is that of Methionine import ATP-binding protein MetN from Lactococcus lactis subsp. cremoris (strain SK11).